A 378-amino-acid chain; its full sequence is Protein RecA (378 aa).

An ATP-binding site is contributed by glycine 79–threonine 86.

It belongs to the RecA family.

It is found in the cytoplasm. Can catalyze the hydrolysis of ATP in the presence of single-stranded DNA, the ATP-dependent uptake of single-stranded DNA by duplex DNA, and the ATP-dependent hybridization of homologous single-stranded DNAs. It interacts with LexA causing its activation and leading to its autocatalytic cleavage. The sequence is that of Protein RecA from Streptococcus pyogenes serotype M12 (strain MGAS2096).